The primary structure comprises 529 residues: Bifunctional purine biosynthesis protein PurH (529 aa).

The MGS-like domain maps to 1 to 148 (MQPPRPVRRA…KNHKDVAIVV (148 aa)).

Belongs to the PurH family.

The enzyme catalyses (6R)-10-formyltetrahydrofolate + 5-amino-1-(5-phospho-beta-D-ribosyl)imidazole-4-carboxamide = 5-formamido-1-(5-phospho-D-ribosyl)imidazole-4-carboxamide + (6S)-5,6,7,8-tetrahydrofolate. It carries out the reaction IMP + H2O = 5-formamido-1-(5-phospho-D-ribosyl)imidazole-4-carboxamide. It participates in purine metabolism; IMP biosynthesis via de novo pathway; 5-formamido-1-(5-phospho-D-ribosyl)imidazole-4-carboxamide from 5-amino-1-(5-phospho-D-ribosyl)imidazole-4-carboxamide (10-formyl THF route): step 1/1. It functions in the pathway purine metabolism; IMP biosynthesis via de novo pathway; IMP from 5-formamido-1-(5-phospho-D-ribosyl)imidazole-4-carboxamide: step 1/1. This chain is Bifunctional purine biosynthesis protein PurH, found in Sodalis glossinidius (strain morsitans).